Reading from the N-terminus, the 294-residue chain is Elongation factor Ts (294 aa).

The interval 82-85 (TDFV) is involved in Mg(2+) ion dislocation from EF-Tu.

This sequence belongs to the EF-Ts family.

Its subcellular location is the cytoplasm. In terms of biological role, associates with the EF-Tu.GDP complex and induces the exchange of GDP to GTP. It remains bound to the aminoacyl-tRNA.EF-Tu.GTP complex up to the GTP hydrolysis stage on the ribosome. In Psychrobacter cryohalolentis (strain ATCC BAA-1226 / DSM 17306 / VKM B-2378 / K5), this protein is Elongation factor Ts.